A 313-amino-acid chain; its full sequence is UPF0252 protein AF_0384 (313 aa).

This sequence belongs to the UPF0252 family.

The sequence is that of UPF0252 protein AF_0384 from Archaeoglobus fulgidus (strain ATCC 49558 / DSM 4304 / JCM 9628 / NBRC 100126 / VC-16).